Here is a 370-residue protein sequence, read N- to C-terminus: DNA replication and repair protein RecF (370 aa).

30-37 contributes to the ATP binding site; that stretch reads GENAQGKT.

Belongs to the RecF family. In terms of assembly, recruited to foci following DNA damage; probably interacts with RecO.

The protein localises to the cytoplasm. Its subcellular location is the nucleoid. In terms of biological role, the RecF protein is involved in DNA metabolism; it is required for DNA replication and normal SOS inducibility. RecF binds preferentially to single-stranded, linear DNA. It also seems to bind ATP. Is recruited to repair centers, foci that are the site of double-strand DNA break(s) after RecN and RecO; recruitment may depend on RecO. A positive modulator of RecA. The sequence is that of DNA replication and repair protein RecF from Bacillus subtilis (strain 168).